Consider the following 352-residue polypeptide: uncharacterized protein (352 aa).

This is an uncharacterized protein from Frog virus 3 (isolate Goorha) (FV-3).